A 203-amino-acid chain; its full sequence is Small ribosomal subunit protein uS4 (203 aa).

The S4 RNA-binding domain occupies 93–173 (RRFDNVVFRS…IPSWIQVDKA (81 aa)).

Belongs to the universal ribosomal protein uS4 family. Part of the 30S ribosomal subunit. Contacts protein S5. The interaction surface between S4 and S5 is involved in control of translational fidelity.

Functionally, one of the primary rRNA binding proteins, it binds directly to 16S rRNA where it nucleates assembly of the body of the 30S subunit. With S5 and S12 plays an important role in translational accuracy. In Chlorobium phaeobacteroides (strain DSM 266 / SMG 266 / 2430), this protein is Small ribosomal subunit protein uS4.